A 660-amino-acid chain; its full sequence is DNA ligase (660 aa).

NAD(+) contacts are provided by residues 33–37, 82–83, and Glu110; these read DFVYD and SL. Lys112 acts as the N6-AMP-lysine intermediate in catalysis. NAD(+) contacts are provided by Arg133, Glu167, Lys281, and Lys305. Zn(2+)-binding residues include Cys396, Cys399, Cys412, and Cys417. Residues 583-660 enclose the BRCT domain; it reads DENRLLAGKK…SFEDIKSYLN (78 aa).

The protein belongs to the NAD-dependent DNA ligase family. LigA subfamily. Mg(2+) serves as cofactor. It depends on Mn(2+) as a cofactor.

It catalyses the reaction NAD(+) + (deoxyribonucleotide)n-3'-hydroxyl + 5'-phospho-(deoxyribonucleotide)m = (deoxyribonucleotide)n+m + AMP + beta-nicotinamide D-nucleotide.. DNA ligase that catalyzes the formation of phosphodiester linkages between 5'-phosphoryl and 3'-hydroxyl groups in double-stranded DNA using NAD as a coenzyme and as the energy source for the reaction. It is essential for DNA replication and repair of damaged DNA. The protein is DNA ligase of Borrelia garinii subsp. bavariensis (strain ATCC BAA-2496 / DSM 23469 / PBi) (Borreliella bavariensis).